Consider the following 244-residue polypeptide: 1-(5-phosphoribosyl)-5-[(5-phosphoribosylamino)methylideneamino] imidazole-4-carboxamide isomerase (244 aa).

Residue aspartate 10 is the Proton acceptor of the active site. Residue aspartate 132 is the Proton donor of the active site.

It belongs to the HisA/HisF family.

The protein localises to the cytoplasm. The catalysed reaction is 1-(5-phospho-beta-D-ribosyl)-5-[(5-phospho-beta-D-ribosylamino)methylideneamino]imidazole-4-carboxamide = 5-[(5-phospho-1-deoxy-D-ribulos-1-ylimino)methylamino]-1-(5-phospho-beta-D-ribosyl)imidazole-4-carboxamide. It functions in the pathway amino-acid biosynthesis; L-histidine biosynthesis; L-histidine from 5-phospho-alpha-D-ribose 1-diphosphate: step 4/9. This chain is 1-(5-phosphoribosyl)-5-[(5-phosphoribosylamino)methylideneamino] imidazole-4-carboxamide isomerase, found in Xanthomonas euvesicatoria pv. vesicatoria (strain 85-10) (Xanthomonas campestris pv. vesicatoria).